A 314-amino-acid polypeptide reads, in one-letter code: DNA-directed RNA polymerase subunit alpha (314 aa).

Residues 1–228 are alpha N-terminal domain (alpha-NTD); that stretch reads MIEIEKPKIE…EHLNIFVGLT (228 aa). Residues 246 to 314 are alpha C-terminal domain (alpha-CTD); the sequence is EKVLEMTIEE…ELGLGLRKDD (69 aa).

Belongs to the RNA polymerase alpha chain family. In terms of assembly, homodimer. The RNAP catalytic core consists of 2 alpha, 1 beta, 1 beta' and 1 omega subunit. When a sigma factor is associated with the core the holoenzyme is formed, which can initiate transcription.

The catalysed reaction is RNA(n) + a ribonucleoside 5'-triphosphate = RNA(n+1) + diphosphate. In terms of biological role, DNA-dependent RNA polymerase catalyzes the transcription of DNA into RNA using the four ribonucleoside triphosphates as substrates. The polypeptide is DNA-directed RNA polymerase subunit alpha (Bacillus velezensis (strain DSM 23117 / BGSC 10A6 / LMG 26770 / FZB42) (Bacillus amyloliquefaciens subsp. plantarum)).